The following is a 329-amino-acid chain: Quinone oxidoreductase (329 aa).

Position 2 is an N-acetylalanine (A2). Residue K23 is modified to N6-acetyllysine. Residues Y53, 158–161 (SGGV), G181, H200, N229, 246–249 (VGSR), and 269–271 (VAL) contribute to the NADP(+) site. A Phosphoserine modification is found at S248.

This sequence belongs to the zinc-containing alcohol dehydrogenase family. Quinone oxidoreductase subfamily. As to quaternary structure, homotetramer.

It localises to the cytoplasm. It carries out the reaction 2 a quinone + NADPH + H(+) = 2 a 1,4-benzosemiquinone + NADP(+). In terms of biological role, does not have alcohol dehydrogenase activity. Binds NADP and acts through a one-electron transfer process. Orthoquinones, such as 1,2-naphthoquinone or 9,10-phenanthrenequinone, are the best substrates (in vitro). May act in the detoxification of xenobiotics. Interacts with (AU)-rich elements (ARE) in the 3'-UTR of target mRNA species and enhances their stability. NADPH binding interferes with mRNA binding. This chain is Quinone oxidoreductase (CRYZ), found in Sus scrofa (Pig).